Consider the following 2185-residue polypeptide: DNA polymerase epsilon catalytic subunit A (2185 aa).

Zn(2+) is bound by residues Cys2072, Cys2075, Cys2094, and Cys2097. A CysA-type zinc finger spans residues 2072–2097 (CEHCSYISDIDICRESMERVFICQSC). Positions 2128, 2131, 2143, and 2145 each coordinate [4Fe-4S] cluster. The CysB motif motif lies at 2128 to 2145 (CNKCHKIKEDAMSPYCPC).

Belongs to the DNA polymerase type-B family. In terms of assembly, heterotetramer. Consists of 4 subunits: POL2, DPB2, DPB3 and DPB4. It depends on [4Fe-4S] cluster as a cofactor.

Its subcellular location is the nucleus. The enzyme catalyses DNA(n) + a 2'-deoxyribonucleoside 5'-triphosphate = DNA(n+1) + diphosphate. DNA polymerase II participates in chromosomal DNA replication. This Kluyveromyces lactis (strain ATCC 8585 / CBS 2359 / DSM 70799 / NBRC 1267 / NRRL Y-1140 / WM37) (Yeast) protein is DNA polymerase epsilon catalytic subunit A (POL2).